The chain runs to 241 residues: Uridylate kinase (241 aa).

Residue 12 to 15 (KLSG) participates in ATP binding. The segment at 20–25 (GDKGQG) is involved in allosteric activation by GTP. Residue Gly-54 coordinates UMP. 2 residues coordinate ATP: Gly-55 and Arg-59. UMP is bound by residues Asp-74 and 135 to 142 (TGSPYFST). Residues Asn-163, Tyr-169, and Asp-172 each contribute to the ATP site.

The protein belongs to the UMP kinase family. Homohexamer.

The protein localises to the cytoplasm. It carries out the reaction UMP + ATP = UDP + ADP. The protein operates within pyrimidine metabolism; CTP biosynthesis via de novo pathway; UDP from UMP (UMPK route): step 1/1. Allosterically activated by GTP. Inhibited by UTP. Catalyzes the reversible phosphorylation of UMP to UDP. The polypeptide is Uridylate kinase (Leuconostoc mesenteroides subsp. mesenteroides (strain ATCC 8293 / DSM 20343 / BCRC 11652 / CCM 1803 / JCM 6124 / NCDO 523 / NBRC 100496 / NCIMB 8023 / NCTC 12954 / NRRL B-1118 / 37Y)).